Reading from the N-terminus, the 1042-residue chain is Isoleucine--tRNA ligase (1042 aa).

Positions 48 to 58 (PFATGLPHFGH) match the 'HIGH' region motif. Positions 594-598 (KMSKS) match the 'KMSKS' region motif. Position 597 (K597) interacts with ATP.

The protein belongs to the class-I aminoacyl-tRNA synthetase family. IleS type 2 subfamily. As to quaternary structure, monomer. Requires Zn(2+) as cofactor.

The protein localises to the cytoplasm. It catalyses the reaction tRNA(Ile) + L-isoleucine + ATP = L-isoleucyl-tRNA(Ile) + AMP + diphosphate. Catalyzes the attachment of isoleucine to tRNA(Ile). As IleRS can inadvertently accommodate and process structurally similar amino acids such as valine, to avoid such errors it has two additional distinct tRNA(Ile)-dependent editing activities. One activity is designated as 'pretransfer' editing and involves the hydrolysis of activated Val-AMP. The other activity is designated 'posttransfer' editing and involves deacylation of mischarged Val-tRNA(Ile). The polypeptide is Isoleucine--tRNA ligase (Borreliella afzelii (strain PKo) (Borrelia afzelii)).